We begin with the raw amino-acid sequence, 160 residues long: Probable NADH dehydrogenase [ubiquinone] 1 beta subcomplex subunit 2, mitochondrial (160 aa).

The protein belongs to the complex I NDUFB2 subunit family. As to quaternary structure, complex I is composed of 45 different subunits.

It localises to the mitochondrion inner membrane. Its function is as follows. Accessory subunit of the mitochondrial membrane respiratory chain NADH dehydrogenase (Complex I), that is believed not to be involved in catalysis. Complex I functions in the transfer of electrons from NADH to the respiratory chain. The immediate electron acceptor for the enzyme is believed to be ubiquinone. The polypeptide is Probable NADH dehydrogenase [ubiquinone] 1 beta subcomplex subunit 2, mitochondrial (Caenorhabditis briggsae).